Consider the following 550-residue polypeptide: Small ribosomal subunit protein uS3m (550 aa).

A disordered region spans residues Asn112 to Ser133.

The protein belongs to the universal ribosomal protein uS3 family.

It localises to the mitochondrion. This chain is Small ribosomal subunit protein uS3m (RPS3), found in Oenothera berteroana (Bertero's evening primrose).